A 617-amino-acid chain; its full sequence is Acetolactate synthase large subunit (617 aa).

E71 contributes to the thiamine diphosphate binding site. Residues R173, 281-302, and 324-343 each bind FAD; these read HGTA…VGAR and EIDP…VLGD. Residues 413–492 form a thiamine pyrophosphate binding region; it reads QHQMWAAQHL…VKVVIVNNHW (80 aa). Residues D463 and N490 each coordinate Mg(2+).

It belongs to the TPP enzyme family. In terms of assembly, dimer of large and small chains. Mg(2+) serves as cofactor. It depends on thiamine diphosphate as a cofactor.

The catalysed reaction is 2 pyruvate + H(+) = (2S)-2-acetolactate + CO2. The protein operates within amino-acid biosynthesis; L-isoleucine biosynthesis; L-isoleucine from 2-oxobutanoate: step 1/4. Its pathway is amino-acid biosynthesis; L-valine biosynthesis; L-valine from pyruvate: step 1/4. The polypeptide is Acetolactate synthase large subunit (ilvB) (Parasynechococcus marenigrum (strain WH8102)).